Reading from the N-terminus, the 293-residue chain is MEKGTFQIKTGFAEMFKGGVIMDVTTPEQAVIAEEAGAVAVMALERVPADIRAQGGVARMSDPKIIKEIMAAVSIPVMAKVRIGHFVEAMILEAIGVDFIDESEVLTPADEEHHIDKWKFKVPFVCGARNLGEALRRIAEGAAMIRTKGEAGTGNVVEAVRHARTMWKEIRYVQSLREDELMAYAKEIGAPFELVKWVHDHGRLPVVNFAAGGIATPADAALMMHLGMDGVFVGSGIFKSGDPRKRARAIVRAVAHYNDPEVLAEVSEDLGEPMVGINLDQLKEEERLAKRGW.

Aspartate 23 provides a ligand contact to D-ribose 5-phosphate. Lysine 80 acts as the Schiff-base intermediate with D-ribose 5-phosphate in catalysis. Glycine 152 contacts D-ribose 5-phosphate. Arginine 164 contributes to the D-glyceraldehyde 3-phosphate binding site. Residues glycine 213 and glycine 234–serine 235 contribute to the D-ribose 5-phosphate site.

The protein belongs to the PdxS/SNZ family. As to quaternary structure, in the presence of PdxT, forms a dodecamer of heterodimers.

The catalysed reaction is aldehydo-D-ribose 5-phosphate + D-glyceraldehyde 3-phosphate + L-glutamine = pyridoxal 5'-phosphate + L-glutamate + phosphate + 3 H2O + H(+). Its pathway is cofactor biosynthesis; pyridoxal 5'-phosphate biosynthesis. Functionally, catalyzes the formation of pyridoxal 5'-phosphate from ribose 5-phosphate (RBP), glyceraldehyde 3-phosphate (G3P) and ammonia. The ammonia is provided by the PdxT subunit. Can also use ribulose 5-phosphate and dihydroxyacetone phosphate as substrates, resulting from enzyme-catalyzed isomerization of RBP and G3P, respectively. The chain is Pyridoxal 5'-phosphate synthase subunit PdxS from Thermus thermophilus (strain ATCC 27634 / DSM 579 / HB8).